The chain runs to 552 residues: Protoheme IX farnesyltransferase, mitochondrial (552 aa).

The segment at 118–185 (AADIPPSTST…PSGEIPPDAS (68 aa)) is disordered. Residues 150 to 168 (EQAASASSNAPSEAAQTTP) show a composition bias toward low complexity. 8 helical membrane passes run 215–235 (LTMLVVLSAMVPYALYPVPDF), 245–267 (LSPLTLLFLTTGTTLCSAAANAL), 296–316 (AAVCFALFCATTGILALQFGV), 318–338 (PTVAFLGAANIVLYAGIYTPL), 346–366 (TWVGAVVGGIPPLMGWAAAAG), 387–407 (AGGWLFAALLFTWQFPHFMAL), 441–461 (VFVPLCVGLCAVGVTEWSFAV), and 487–507 (ARGLFWASVWHLPVVMVLALL).

Belongs to the UbiA prenyltransferase family.

The protein localises to the mitochondrion membrane. It carries out the reaction heme b + (2E,6E)-farnesyl diphosphate + H2O = Fe(II)-heme o + diphosphate. Its function is as follows. Converts protoheme IX and farnesyl diphosphate to heme O. In Pyricularia oryzae (strain 70-15 / ATCC MYA-4617 / FGSC 8958) (Rice blast fungus), this protein is Protoheme IX farnesyltransferase, mitochondrial (COX10).